We begin with the raw amino-acid sequence, 304 residues long: GS homeobox 2 (304 aa).

Positions 116 to 151 (AQFCPRVNHAHHHHHPPQHHHHHHQPQQPGSAAAAA) are disordered. Over residues 123–140 (NHAHHHHHPPQHHHHHHQ) the composition is skewed to basic residues. The segment covering 141–151 (PQQPGSAAAAA) has biased composition (low complexity). Positions 202–261 (GKRMRTAFTSTQLLELEREFSSNMYLSRLRRIEIATYLNLSEKQVKIWFQNRRVKHKKEG) form a DNA-binding region, homeobox. Residues 283 to 304 (RSEDEDSLSPASANDDKEISPL) are disordered.

This sequence belongs to the Antp homeobox family.

The protein resides in the nucleus. Its subcellular location is the cytoplasm. In terms of biological role, transcription factor that binds 5'-CNAATTAG-3' DNA sequence and regulates the expression of numerous genes including genes important for brain development. During telencephalic development, causes ventralization of pallial progenitors and, depending on the developmental stage, specifies different neuronal fates. At early stages, necessary and sufficient to correctly specify the ventral lateral ganglionic eminence (LGE) and its major derivatives, the striatal projection neurons. At later stages, may specify LGE progenitors toward dorsal LGE fates, including olfactory bulb interneurons. The protein is GS homeobox 2 (GSX2) of Homo sapiens (Human).